The sequence spans 308 residues: ADP-L-glycero-D-manno-heptose-6-epimerase (308 aa).

NADP(+) contacts are provided by residues 10-11 (MI), 31-32 (DN), Lys-38, Lys-53, 75-79 (EGACS), and Asn-92. Residue Tyr-140 is the Proton acceptor of the active site. An NADP(+)-binding site is contributed by Lys-144. Asn-169 is a binding site for substrate. NADP(+)-binding residues include Val-170 and Lys-178. The active-site Proton acceptor is Lys-178. Residues Ser-180, His-187, 201–204 (FEGS), Arg-209, and Tyr-272 contribute to the substrate site.

Belongs to the NAD(P)-dependent epimerase/dehydratase family. HldD subfamily. As to quaternary structure, homopentamer. NADP(+) serves as cofactor.

The enzyme catalyses ADP-D-glycero-beta-D-manno-heptose = ADP-L-glycero-beta-D-manno-heptose. Its pathway is nucleotide-sugar biosynthesis; ADP-L-glycero-beta-D-manno-heptose biosynthesis; ADP-L-glycero-beta-D-manno-heptose from D-glycero-beta-D-manno-heptose 7-phosphate: step 4/4. Functionally, catalyzes the interconversion between ADP-D-glycero-beta-D-manno-heptose and ADP-L-glycero-beta-D-manno-heptose via an epimerization at carbon 6 of the heptose. This chain is ADP-L-glycero-D-manno-heptose-6-epimerase, found in Actinobacillus pleuropneumoniae serotype 7 (strain AP76).